Reading from the N-terminus, the 234-residue chain is Ribonuclease HII (234 aa).

The RNase H type-2 domain maps to 47 to 234 (IRIAGVDEVG…KTVHKILYQE (188 aa)). A divalent metal cation contacts are provided by D53, E54, and D144.

The protein belongs to the RNase HII family. Requires Mn(2+) as cofactor. Mg(2+) is required as a cofactor.

It is found in the cytoplasm. The catalysed reaction is Endonucleolytic cleavage to 5'-phosphomonoester.. Endonuclease that specifically degrades the RNA of RNA-DNA hybrids. The protein is Ribonuclease HII of Ruegeria pomeroyi (strain ATCC 700808 / DSM 15171 / DSS-3) (Silicibacter pomeroyi).